We begin with the raw amino-acid sequence, 134 residues long: Fluoride-specific ion channel FluC (134 aa).

Transmembrane regions (helical) follow at residues 7 to 27, 38 to 58, 69 to 89, and 110 to 130; these read LAVAIGGSLGAMSRYLVTIMA, GTLLVNTLGSFLAGFFLIVLV, LFLFTGFLGAFTTFSSFAAES, and VGSLSMVFIGTLVAKYVLLGH. Na(+) is bound by residues G77 and T80.

Belongs to the fluoride channel Fluc/FEX (TC 1.A.43) family.

The protein localises to the cell inner membrane. It carries out the reaction fluoride(in) = fluoride(out). Na(+) is not transported, but it plays an essential structural role and its presence is essential for fluoride channel function. Functionally, fluoride-specific ion channel. Important for reducing fluoride concentration in the cell, thus reducing its toxicity. The polypeptide is Fluoride-specific ion channel FluC (Legionella pneumophila (strain Paris)).